A 624-amino-acid polypeptide reads, in one-letter code: MPGAMRQSTSNLELLTIYEVSKILGSSLDLQQTLREVLRALAYQLQMHRGRVYLVGEDNVLRLVAANGLSNEAAAQIEFRDGEGITGRILKTGMPAVVPNLAEEPLFLNRTGGREDLDEQVASLVGVPIKAAGVVVGVLTIDRISDEGPQGHFGSDVRFLTMVANLIGQTVRLPHVAEEPLRDAETFRMQKELRPIAAPINDVVCTSPNMLEVMAQVHRVAPFKSTVLIRGESGTGKELIARAIHNMSPRKDAPFIRVNCAALPESLLESELFGHEKGAFTGAQKDHKGRFELASGGTLFLDEIGDISPNFQAKLLRVLQEQEFERVGGSKTIKTDVRLICATNLNLEEAIGHGKFRADLYFRINVVTIHLPPLRERRQDIGPLARHFVAKFAKDNGMTLVMEDEALEVLNRCTWPGNVRELENCIERAATQSRDGIIRTESLSCSLNLCNSSVLFQYRTLGASVGGLAPSMGPGSVNRVPPGRPGVPAPANAPKAPAMPAPVPEPAGAGSAWPACASGCSAGPSPVCGAAQPAVPVPLIPLPLPEPSAPAAAAPAPTSVTNAAPPPAAEVPLDEPESGSLRDRLLWAMERTGWVQAKAARLLGMTTRQVSYALRKYNIEIKRF.

Residues 29–171 form the GAF domain; sequence DLQQTLREVL…MVANLIGQTV (143 aa). A Sigma-54 factor interaction domain is found at 203–431; that stretch reads VVCTSPNMLE…LENCIERAAT (229 aa). ATP contacts are provided by residues 231–238 and 294–303; these read GESGTGKE and ASGGTLFLDE. Residues 432–581 form an inter-domain linker region; the sequence is QSRDGIIRTE…PLDEPESGSL (150 aa). A divalent metal cation-binding residues include Cys-445 and Cys-450. 2 disordered regions span residues 477 to 508 and 549 to 578; these read VNRV…EPAG and APAA…EPES. The segment covering 549 to 563 has biased composition (low complexity); that stretch reads APAAAAPAPTSVTNA. Residues 582-624 are C-terminal DNA-binding domain; that stretch reads RDRLLWAMERTGWVQAKAARLLGMTTRQVSYALRKYNIEIKRF. The segment at residues 596–615 is a DNA-binding region (H-T-H motif); that stretch reads QAKAARLLGMTTRQVSYALR.

In terms of assembly, interacts with sigma-54.

Its function is as follows. Required for activation of most nif operons, which are directly involved in nitrogen fixation. This is Nif-specific regulatory protein (nifA) from Azospirillum lipoferum.